The following is a 179-amino-acid chain: MKAESVSQWILVILFATLLFFAFTGIFVSTLLVVLTPEGFAFLLGFLGALVFANKLLFGYGSFVITAEAFLTNKEIDRRELAKKTNEPVERTENLSIPALLALWLAGLDYYRYAYYGIFTLMLIIMLLSKFDLLGALTIGNYFEGAFWGAAVITLFVFALEITANYLMARINEEVSLNG.

4 helical membrane passes run 9-31 (WILV…VSTL), 41-63 (AFLL…YGSF), 114-136 (AYYG…LLGA), and 146-168 (AFWG…NYLM).

The protein resides in the cell membrane. This is an uncharacterized protein from Aquifex aeolicus (strain VF5).